The sequence spans 173 residues: Shikimate kinase 2 (173 aa).

An ATP-binding site is contributed by 12-17 (GCGKTT). Mg(2+) contacts are provided by Thr-16 and Asp-32. Substrate-binding residues include Asp-34, Arg-58, and Gly-79. The tract at residues 112 to 126 (EENPQDNQRPTLTGR) is LID domain. Arg-120 contacts ATP. Arg-139 contributes to the substrate binding site. Position 155 (Gln-155) interacts with ATP.

Belongs to the shikimate kinase family. AroL subfamily. In terms of assembly, monomer. Mg(2+) is required as a cofactor.

The protein resides in the cytoplasm. The enzyme catalyses shikimate + ATP = 3-phosphoshikimate + ADP + H(+). Its pathway is metabolic intermediate biosynthesis; chorismate biosynthesis; chorismate from D-erythrose 4-phosphate and phosphoenolpyruvate: step 5/7. Its function is as follows. Catalyzes the specific phosphorylation of the 3-hydroxyl group of shikimic acid using ATP as a cosubstrate. This chain is Shikimate kinase 2, found in Pectobacterium carotovorum subsp. carotovorum (strain PC1).